The sequence spans 214 residues: Probable GTP-binding protein EngB (214 aa).

The EngB-type G domain maps to 22 to 194 (NLPEIAFAGR…WARIDALLSP (173 aa)). GTP-binding positions include 30–37 (GRSNVGKS), 57–61 (GRTQL), 75–78 (DLPG), 142–145 (TKCD), and 173–175 (FSA). Residues serine 37 and threonine 59 each contribute to the Mg(2+) site.

The protein belongs to the TRAFAC class TrmE-Era-EngA-EngB-Septin-like GTPase superfamily. EngB GTPase family. The cofactor is Mg(2+).

Functionally, necessary for normal cell division and for the maintenance of normal septation. The sequence is that of Probable GTP-binding protein EngB from Citrifermentans bemidjiense (strain ATCC BAA-1014 / DSM 16622 / JCM 12645 / Bem) (Geobacter bemidjiensis).